We begin with the raw amino-acid sequence, 375 residues long: Putative prophage phiRv2 integrase (375 aa).

One can recognise a Core-binding (CB) domain in the interval 75–153 (APFGEYAEGW…LLRAIMQTAL (79 aa)). Residues 175 to 364 (HKIRPATLDE…AKGRDREIAA (190 aa)) form the Tyr recombinase domain. Catalysis depends on residues arginine 209, histidine 316, arginine 319, and histidine 342. Tyrosine 351 acts as the O-(3'-phospho-DNA)-tyrosine intermediate in catalysis.

The protein belongs to the 'phage' integrase family.

In terms of biological role, integrase is necessary for integration of the phage into the host genome by site-specific recombination. In conjunction with excisionase, integrase is also necessary for excision of the prophage from the host genome. The sequence is that of Putative prophage phiRv2 integrase from Mycobacterium tuberculosis (strain CDC 1551 / Oshkosh).